Here is an 835-residue protein sequence, read N- to C-terminus: Beta-galactosidase (835 aa).

The N-terminal stretch at 1-22 is a signal peptide; sequence MGFWMAMLLMLLLCLWVSCGIA. The active-site Proton donor is the Glu180. Glu249 serves as the catalytic Nucleophile. Residues 749–835 enclose the SUEL-type lectin domain; that stretch reads RPLRPKAHLK…KKLSVEAICS (87 aa).

It belongs to the glycosyl hydrolase 35 family.

It catalyses the reaction Hydrolysis of terminal non-reducing beta-D-galactose residues in beta-D-galactosides.. In terms of biological role, involved in cell wall degradation. Degrades polysaccharides containing beta-(1--&gt;4)-linked galactans, acting as an exo-(1--&gt;4)-beta-D-galactanase. This Solanum lycopersicum (Tomato) protein is Beta-galactosidase.